The sequence spans 393 residues: NAD(P)H-quinone oxidoreductase subunit H, chloroplastic (393 aa).

Belongs to the complex I 49 kDa subunit family. In terms of assembly, NDH is composed of at least 16 different subunits, 5 of which are encoded in the nucleus.

The protein localises to the plastid. The protein resides in the chloroplast thylakoid membrane. It carries out the reaction a plastoquinone + NADH + (n+1) H(+)(in) = a plastoquinol + NAD(+) + n H(+)(out). The enzyme catalyses a plastoquinone + NADPH + (n+1) H(+)(in) = a plastoquinol + NADP(+) + n H(+)(out). Functionally, NDH shuttles electrons from NAD(P)H:plastoquinone, via FMN and iron-sulfur (Fe-S) centers, to quinones in the photosynthetic chain and possibly in a chloroplast respiratory chain. The immediate electron acceptor for the enzyme in this species is believed to be plastoquinone. Couples the redox reaction to proton translocation, and thus conserves the redox energy in a proton gradient. This Barbarea verna (Land cress) protein is NAD(P)H-quinone oxidoreductase subunit H, chloroplastic.